Consider the following 1026-residue polypeptide: Multidrug resistance protein MdtC (1026 aa).

11 helical membrane-spanning segments follow: residues 15-35, 333-353, 360-380, 387-407, 431-451, 463-483, 528-548, 853-873, 897-917, 953-973, and 984-1004; these read ILIA…LPVA, EVEE…FLFL, LIPA…MYLC, LSLM…IVVL, VGFT…PLLL, FAVT…TLTP, LVGV…IAIP, LILI…LYES, LFNA…IGIV, PIMM…LSGG, and ITIV…TPVV.

Belongs to the resistance-nodulation-cell division (RND) (TC 2.A.6) family. MdtC subfamily. In terms of assembly, part of a tripartite efflux system composed of MdtA, MdtB and MdtC. MdtC forms a heteromultimer with MdtB.

The protein localises to the cell inner membrane. The protein is Multidrug resistance protein MdtC of Salmonella paratyphi A (strain ATCC 9150 / SARB42).